The following is a 519-amino-acid chain: Cell adhesion molecule CEACAM1 (519 aa).

The first 34 residues, 1 to 34, serve as a signal peptide directing secretion; that stretch reads MELASARLLRGQIPWRGLLLTASLLTYWSPLTTA. Gln35 carries the pyrrolidone carboxylic acid modification. The Extracellular segment spans residues 35 to 425; it reads QVTVDAVPPN…QGNSGLSEGA (391 aa). Residues 39–142 form a required for homophilic binding region; it reads DAVPPNVVEE…QTSVQFRVYP (104 aa). Positions 42–140 constitute an Ig-like V-type domain; the sequence is PPNVVEEKSV…PIQTSVQFRV (99 aa). N-linked (GlcNAc...) asparagine glycans are attached at residues Asn87, Asn104, Asn113, Asn148, Asn152, Asn173, Asn197, Asn224, Asn256, Asn288, Asn292, Asn302, Asn315, and Asn331. Ig-like C2-type domains are found at residues 147–232, 237–317, and 325–403; these read PNVT…FNLD, PDAP…KNIT, and PSIQ…FRIS. Cys167 and Cys215 form a disulfide bridge. A disulfide bridge links Cys259 with Cys299. Cys344 and Cys392 are joined by a disulfide. Asn374 is a glycosylation site (N-linked (GlcNAc...) asparagine; atypical). The chain crosses the membrane as a helical span at residues 426 to 446; sequence IAGIVIGSVAGVALIAALAYF. Residues 445–457 form an interaction with calmodulin region; it reads YFLYSRKTGGGSD. Topologically, residues 447–519 are cytoplasmic; that stretch reads LYSRKTGGGS…ETVYSVVKKK (73 aa). An interaction with FLNA region spans residues 447–519; it reads LYSRKTGGGS…ETVYSVVKKK (73 aa). The disordered stretch occupies residues 455 to 519; that stretch reads GSDHRDLTEH…ETVYSVVKKK (65 aa). Basic and acidic residues predominate over residues 456–466; sequence SDHRDLTEHKP. The tract at residues 484–519 is required for interaction with PTPN11 and PTPN6 and for control of phosphorylation level; sequence DDVSYSVLNFNAQQSKRPTSASSSPTETVYSVVKKK. Tyr488 is subject to Phosphotyrosine; by SRC, LCK, INSR and EGFR. Residues 489–512 are compositionally biased toward polar residues; the sequence is SVLNFNAQQSKRPTSASSSPTETV. Ser503 is subject to Phosphoserine. Tyr513 is subject to Phosphotyrosine; by INSR, SRC and LCK. The essential for interaction with PTPN11 and PTPN6 stretch occupies residues 513 to 516; the sequence is YSVV.

It belongs to the immunoglobulin superfamily. CEA family. In terms of assembly, monomer. Oligomer. Heterodimer. Homodimer. Cis-dimer/oligomer (via Ig-like C2-type and/or via cytoplasmic domains); induced by trans-homophilic cell adhesion through an allosteric mechanism transmitted by the Ig-like V-type domain, and is regulated by intracellular calcium and calmodulin. Interacts (via cytoplasmic domain) with calmodulin in a calcium dependent manner; reduces homophilic cell adhesion through dissociation of dimer. Isoform 1 interacts (via cytoplasmic domain) with PTPN11 (preferentially) and PTPN6; cis-homodimer form is preferred; this interaction is decreased by formation of isoform 1 / isoform 2 cis-heterodimers and is dependent on the monomer/dimer equilibrium; this interaction is phosphorylation-dependent. Isoform 1 interacts with LYN. Isoform 1 interacts (via cytoplasmic domain) with SRC (via SH2 domain); this interaction is regulated by trans-homophilic cell adhesion. Isoform 1 interacts (via cytoplasmic domain) with LCK; mediates phosphorylation at Tyr-488 and Tyr-513 resulting in PTPN6 association. Isoform 1 interacts with PTPN6; this interaction is phosphorylation-dependent and causes a profound decrease in TCR stimulation-induced CD247 and ZAP70 phosphorylation. Isoform 1 interacts with TCR/CD3 complex through TCR beta chain and CD3E; colocalizes at the cell surface and upon stimulation of the TCR/CD3 complex recruits PTPN6 in the TCR/CD3 complex, resulting in dephosphorylation of CD247 and ZAP70. Isoform 1 interacts (via cytoplasmic domain) with SHC1 (via SH2 domain); SHC1 mediates interaction with INSR or EGFR in a Ser-503 phosphorylation-dependent manner. Isoform 1 interacts with EGFR; the interaction is indirect. Isoform 1 interacts with CSF3R; down-regulates the CSF3R-STAT3 pathway through recruitment of PTPN6 that dephosphorylates CSF3R. Isoform 1 (phosphorylated form) interacts with TLR4 and SYK; recruits PTPN6 that dephosphorylates SYK, reducing the production of reactive oxygen species (ROS) and lysosome disruption, leading to a reduction of the inflammasome activity. Isoform 1 interacts with FLNA; inhibits cell migration and cell scattering by interfering with the interaction of FLNA with RALA. Isoform 1 interacts (via cytoplasmic domain) with PXN; the interaction is phosphotyrosyl-dependent. Isoform 1 interacts with KLRK1; recruits PTPN6 that dephosphorylates VAV1. Isoform 1 interacts with CEACAM8. Isoform 1 interacts with FASN; this interaction is insulin and phosphorylation-dependent; reduces fatty-acid synthase activity. Interacts (via Ig-like V-type) with HAVCR2 (via Ig-like V-type); facilitates the maturation and cell surface expression of HAVCR2 thereby regulating T-cell tolerance induction. Isoform 2 interacts (via the cytoplasmic domain) with ANXA2; this interaction is regulated by phosphorylation and appears in the AIIt complex. Interacts (via Lewis X moieties) with CD209 (via C-type lectin domain); this interaction is regulated by the glycosylation pattern of CEACAM1 on cell types and regulates contact between dendritic cells and neutrophils. Phosphorylated on serine and tyrosine. Isoform 1 is phosphorylated on tyrosine by Src family kinases like SRC and LCK and by receptor like CSF3R, EGFR and INSR upon stimulation. Phosphorylated at Ser-503; mediates activity. Phosphorylated at Tyr-488; regulates activity. Phosphorylated at Tyr-488 by EGFR and INSR upon stimulation; this phosphorylation is Ser-503-phosphorylation-dependent; mediates cellular internalization; increases interaction with FASN. Phosphorylated at Tyr-488 and Tyr-513 by LCK; mediates PTPN6 association and is regulated by homophilic ligation of CEACAM1 in the absence of T-cell activation. Phosphorylated at Tyr-513; mediates interaction with PTPN11. Post-translationally, phosphorylated on serine and threonine. In terms of tissue distribution, expressed in epithelia, vessel endothelia, leukocytes and platelets. Isoform 1 and isoform 2 are highly expressed in liver and intestine, moderately in lung, and weakly in muscle, kidney, and spleen. Expressed in granulocytes, lymphocytes, granulocytes, B cells, and T-cells.

The protein localises to the cell membrane. It is found in the lateral cell membrane. The protein resides in the apical cell membrane. It localises to the basal cell membrane. Its subcellular location is the cell junction. The protein localises to the adherens junction. It is found in the cytoplasmic vesicle. The protein resides in the secretory vesicle. It localises to the cell projection. Its subcellular location is the microvillus membrane. Functionally, cell adhesion protein that mediates homophilic cell adhesion in a calcium-independent manner. Plays a role as coinhibitory receptor in immune response, insulin action and also functions as an activator during angiogenesis. Its coinhibitory receptor function is phosphorylation- and PTPN6 -dependent, which in turn, suppress signal transduction of associated receptors by dephosphorylation of their downstream effectors. Plays a role in immune response, of T-cells, natural killer (NK) and neutrophils. Upon TCR/CD3 complex stimulation, inhibits TCR-mediated cytotoxicity by blocking granule exocytosis by mediating homophilic binding to adjacent cells, allowing interaction with and phosphorylation by LCK and interaction with the TCR/CD3 complex which recruits PTPN6 resulting in dephosphorylation of CD247 and ZAP70. Also inhibits T-cell proliferation and cytokine production through inhibition of JNK cascade and plays a crucial role in regulating autoimmunity and anti-tumor immunity by inhibiting T-cell through its interaction with HAVCR2. Upon natural killer (NK) cells activation, inhibit KLRK1-mediated cytolysis of CEACAM1-bearing tumor cells by trans-homophilic interactions with CEACAM1 on the target cell and lead to cis-interaction between CEACAM1 and KLRK1, allowing PTPN6 recruitment and then VAV1 dephosphorylation. Upon neutrophils activation negatively regulates IL1B production by recruiting PTPN6 to a SYK-TLR4-CEACAM1 complex, that dephosphorylates SYK, reducing the production of reactive oxygen species (ROS) and lysosome disruption, which in turn, reduces the activity of the inflammasome. Down-regulates neutrophil production by acting as a coinhibitory receptor for CSF3R by downregulating the CSF3R-STAT3 pathway through recruitment of PTPN6 that dephosphorylates CSF3R. Also regulates insulin action by promoting INS clearance and regulating lipogenesis in liver through regulating insulin signaling. Upon INS stimulation, undergoes phosphorylation by INSR leading to INS clearance by increasing receptor-mediated insulin endocytosis. This inernalization promotes interaction with FASN leading to receptor-mediated insulin degradation and to reduction of FASN activity leading to negative regulation of fatty acid synthesis. INSR-mediated phosphorylation also provokes a down-regulation of cell proliferation through SHC1 interaction resulting in decrease coupling of SHC1 to the MAPK3/ERK1-MAPK1/ERK2 and phosphatidylinositol 3-kinase pathways. Functions as activator in angiogenesis by promoting blood vessel remodeling through endothelial cell differentiation and migration and in arteriogenesis by increasing the number of collateral arteries and collateral vessel calibers after ischemia. Also regulates vascular permeability through the VEGFR2 signaling pathway resulting in control of nitric oxide production. Down-regulates cell growth in response to EGF through its interaction with SHC1 that mediates interaction with EGFR resulting in decrease coupling of SHC1 to the MAPK3/ERK1-MAPK1/ERK2 pathway. Negatively regulates platelet aggregation by decreasing platelet adhesion on type I collagen through the GPVI-FcRgamma complex. Inhibits cell migration and cell scattering through interaction with FLNA; interferes with the interaction of FLNA with RALA. Mediates bile acid transport activity in a phosphorylation dependent manner. Negatively regulates osteoclastogenesis. Cell adhesion proteins that mediates homophilic cell adhesion in a calcium-independent manner. Promotes populations of T-cells regulating IgA production and secretion associated with control of the commensal microbiota and resistance to enteropathogens. The sequence is that of Cell adhesion molecule CEACAM1 from Rattus norvegicus (Rat).